An 82-amino-acid chain; its full sequence is Chaperone protein DnaJ 1 (82 aa).

A disordered region spans residues 1 to 33 (YHLGGPPVTLKLPPGTPAGRTMRARGKGAVRKD).

It belongs to the DnaJ family. In terms of assembly, homodimer. It depends on Zn(2+) as a cofactor.

It localises to the cytoplasm. Its function is as follows. Participates actively in the response to hyperosmotic and heat shock by preventing the aggregation of stress-denatured proteins and by disaggregating proteins, also in an autonomous, DnaK-independent fashion. Unfolded proteins bind initially to DnaJ; upon interaction with the DnaJ-bound protein, DnaK hydrolyzes its bound ATP, resulting in the formation of a stable complex. GrpE releases ADP from DnaK; ATP binding to DnaK triggers the release of the substrate protein, thus completing the reaction cycle. Several rounds of ATP-dependent interactions between DnaJ, DnaK and GrpE are required for fully efficient folding. Also involved, together with DnaK and GrpE, in the DNA replication of plasmids through activation of initiation proteins. The sequence is that of Chaperone protein DnaJ 1 (dnaJ1) from Streptomyces albus G.